Reading from the N-terminus, the 310-residue chain is Beta-ketoacyl-[acyl-carrier-protein] synthase III (310 aa).

Active-site residues include C112 and H235. Residues 236–240 are ACP-binding; it reads QANIR. N265 is a catalytic residue.

It belongs to the thiolase-like superfamily. FabH family. Homodimer.

It is found in the cytoplasm. The catalysed reaction is malonyl-[ACP] + acetyl-CoA + H(+) = 3-oxobutanoyl-[ACP] + CO2 + CoA. It functions in the pathway lipid metabolism; fatty acid biosynthesis. Functionally, catalyzes the condensation reaction of fatty acid synthesis by the addition to an acyl acceptor of two carbons from malonyl-ACP. Catalyzes the first condensation reaction which initiates fatty acid synthesis and may therefore play a role in governing the total rate of fatty acid production. Possesses both acetoacetyl-ACP synthase and acetyl transacylase activities. Its substrate specificity determines the biosynthesis of branched-chain and/or straight-chain of fatty acids. In Geobacillus kaustophilus (strain HTA426), this protein is Beta-ketoacyl-[acyl-carrier-protein] synthase III.